The following is a 446-amino-acid chain: FAD-dependent monooxygenase eupB (446 aa).

A helical transmembrane segment spans residues Glu-10 to Leu-30. Residue Asn-33 is glycosylated (N-linked (GlcNAc...) asparagine). FAD-binding residues include Glu-40, Ala-53, and Arg-125. Active-site residues include Arg-206 and Tyr-239. N-linked (GlcNAc...) asparagine glycosylation is present at Asn-243. FAD-binding residues include Asp-322 and Ala-335. The N-linked (GlcNAc...) asparagine glycan is linked to Asn-395.

This sequence belongs to the paxM FAD-dependent monooxygenase family. The cofactor is FAD.

Its subcellular location is the membrane. The protein operates within secondary metabolite biosynthesis; terpenoid biosynthesis. Its function is as follows. FAD-dependent monooxygenase; part of the gene cluster that mediates the biosynthesis of eupenifeldin, a bistropolone meroterpenoid that acts as an antitumor agent. The first step of eupenifeldin biosynthesis is the biosynthesis of 3-methylorcinaldehyde performed by the non-reducing polyketide synthase eupA. Oxidative dearomatization of 3-methylorcinaldehyde likely catalyzed by the FAD-dependent monooxygenase eupB is followed by oxidative ring expansion by the 2-oxoglutarate-dependent dioxygenase eupC to provide the first tropolone metabolite, tropolone stipitaldehyde. In parallel, generation of sesquiterpene alpha-humulene from farnesylpyrophosphate (FPP) is catalyzed by the terpene cyclase eupE. The cytochrome P450 monooxygenase eupD then hydroxylates humulene to humulenol. The putative Diels-Alderase eupF probably catalyzes the formation of the tropolone-humulene skeleton by linking humulenol and the polyketide moiety. The short-chain dehydrogenase/reductase eupG and the flavin-dependent monooxygenase eupH are also essential for eupenifeldin biosynthesis and are likely the additional decorating enzymes of the tropolone-humulene skeleton to produce final eupenifeldin or derivatives. This chain is FAD-dependent monooxygenase eupB, found in Phoma sp.